The sequence spans 123 residues: UPF0738 protein BcerKBAB4_1107 (123 aa).

The protein belongs to the UPF0738 family.

The chain is UPF0738 protein BcerKBAB4_1107 from Bacillus mycoides (strain KBAB4) (Bacillus weihenstephanensis).